The primary structure comprises 286 residues: 2-dehydro-3-deoxyphosphooctonate aldolase (286 aa).

Belongs to the KdsA family.

The protein localises to the cytoplasm. The catalysed reaction is D-arabinose 5-phosphate + phosphoenolpyruvate + H2O = 3-deoxy-alpha-D-manno-2-octulosonate-8-phosphate + phosphate. Its pathway is carbohydrate biosynthesis; 3-deoxy-D-manno-octulosonate biosynthesis; 3-deoxy-D-manno-octulosonate from D-ribulose 5-phosphate: step 2/3. It participates in bacterial outer membrane biogenesis; lipopolysaccharide biosynthesis. The sequence is that of 2-dehydro-3-deoxyphosphooctonate aldolase from Shewanella denitrificans (strain OS217 / ATCC BAA-1090 / DSM 15013).